The sequence spans 393 residues: Acetate kinase (393 aa).

Asparagine 7 is a binding site for Mg(2+). ATP is bound at residue lysine 14. Arginine 87 contributes to the substrate binding site. Aspartate 144 acts as the Proton donor/acceptor in catalysis. Residues 202–206 (HIGNG), 277–279 (DLR), and 326–330 (GVGEN) contribute to the ATP site. Glutamate 380 contacts Mg(2+).

It belongs to the acetokinase family. As to quaternary structure, homodimer. Mg(2+) serves as cofactor. It depends on Mn(2+) as a cofactor.

It localises to the cytoplasm. It carries out the reaction acetate + ATP = acetyl phosphate + ADP. It participates in metabolic intermediate biosynthesis; acetyl-CoA biosynthesis; acetyl-CoA from acetate: step 1/2. Functionally, catalyzes the formation of acetyl phosphate from acetate and ATP. Can also catalyze the reverse reaction. The chain is Acetate kinase from Mycoplasmopsis pulmonis (strain UAB CTIP) (Mycoplasma pulmonis).